Here is a 131-residue protein sequence, read N- to C-terminus: Fluoride-specific ion channel FluC (131 aa).

4 helical membrane passes run 10–30 (AAVAIGGALGAVCRYLLSGLV), 36–56 (FPMGTVLVNVLGSFVLGFLTW), 71–91 (LATVGFCGGLTTLSTMAYETV), and 99–119 (VLSILYLTANVVLGIAAVLGG). 2 residues coordinate Na(+): Gly78 and Thr81.

The protein belongs to the fluoride channel Fluc/FEX (TC 1.A.43) family.

It localises to the cell membrane. It carries out the reaction fluoride(in) = fluoride(out). Its activity is regulated as follows. Na(+) is not transported, but it plays an essential structural role and its presence is essential for fluoride channel function. Functionally, fluoride-specific ion channel. Important for reducing fluoride concentration in the cell, thus reducing its toxicity. This is Fluoride-specific ion channel FluC from Methanopyrus kandleri (strain AV19 / DSM 6324 / JCM 9639 / NBRC 100938).